Here is a 357-residue protein sequence, read N- to C-terminus: Vomeronasal type-1 receptor 5 (357 aa).

Over 1-3 (MLK) the chain is Extracellular. The helical transmembrane segment at 4 to 24 (LVIIENMAEIMLFSLDLLLFS) threads the bilayer. At 25–52 (TDILCFNFPSKMIKLPGFITIQIFFYPQ) the chain is on the cytoplasmic side. A helical transmembrane segment spans residues 53-73 (ASFGISANTILLLFHIFTFVF). Over 74–81 (SHRSKSID) the chain is Extracellular. The chain crosses the membrane as a helical span at residues 82–102 (MIISHLSLIHILLLFTQAILV). Topologically, residues 103–130 (SLDFFGSQNTQDDLRYKVIVFLNKVMRG) are cytoplasmic. The chain crosses the membrane as a helical span at residues 131 to 151 (LSICTPCLLSVLQAIISPSIF). The Extracellular segment spans residues 152–163 (SLAKLKHPSASH). The chain crosses the membrane as a helical span at residues 164 to 184 (ILGFFLFSWVLNMFIGVIFCC). Residues 185 to 269 (TLRLPPVKRG…RVSPVKRASQ (85 aa)) are Cytoplasmic-facing. A helical membrane pass occupies residues 270–290 (AILLLVSFVFTYWVDFTFSFS). Residues 291–300 (GGVTWINDSL) are Extracellular-facing. Asn297 is a glycosylation site (N-linked (GlcNAc...) asparagine). Residues 301 to 321 (LVWLQVIVANSYAAISPLMLI) form a helical membrane-spanning segment. Residues 322–357 (YADNQIFKTLQMLWFKYLSPPKLMLKFNRQCGSTKK) are Cytoplasmic-facing.

Belongs to the G-protein coupled receptor 1 family.

The protein localises to the cell membrane. Functionally, putative pheromone receptor. This chain is Vomeronasal type-1 receptor 5 (VN1R5), found in Homo sapiens (Human).